A 153-amino-acid polypeptide reads, in one-letter code: UPF0311 protein Rpal_1987 (153 aa).

This sequence belongs to the UPF0311 family.

The protein is UPF0311 protein Rpal_1987 of Rhodopseudomonas palustris (strain TIE-1).